We begin with the raw amino-acid sequence, 327 residues long: Interleukin-12 subunit beta (327 aa).

The N-terminal stretch at 1–22 (MHPQQLVVSWFSLVLLASPIVA) is a signal peptide. The Ig-like C2-type domain maps to 23–106 (IWELEKNVYI…LSRSLLLLHK (84 aa)). Cys-50 and Cys-90 are oxidised to a cystine. Residue Asn-223 is glycosylated (N-linked (GlcNAc...) asparagine). The region spanning 238-327 (PPKNLQLRPL…WSEWASVSCS (90 aa)) is the Fibronectin type-III domain.

This sequence belongs to the IL-12B family. As to quaternary structure, heterodimer with IL12A; disulfide-linked. The heterodimer is known as interleukin IL-12. Heterodimer with IL23A; disulfide-linked. The heterodimer is known as interleukin IL-23. Also secreted as a monomer. Interacts with NBR1; this interaction promotes IL-12 secretion.

It localises to the secreted. Cytokine that can act as a growth factor for activated T and NK cells, enhance the lytic activity of NK/lymphokine-activated killer cells, and stimulate the production of IFN-gamma by resting PBMC. The chain is Interleukin-12 subunit beta (IL12B) from Bubalus carabanensis (Swamp type water buffalo).